The following is a 456-amino-acid chain: Protein ESC2 (456 aa).

Over residues methionine 1–aspartate 24 the composition is skewed to polar residues. Residues methionine 1 to glycine 154 are disordered. Acidic residues predominate over residues glutamate 25–histidine 43. Residues glutamine 83–valine 93 show a composition bias toward polar residues. Phosphoserine is present on residues serine 90, serine 125, and serine 126. An SUMO-like region 1 repeat occupies glutamate 169–isoleucine 287. A coiled-coil region spans residues glutamate 301–threonine 360. The stretch at methionine 380–aspartate 456 is one SUMO-like region 2 repeat.

As to quaternary structure, component of a cullin-RING ligase (CRL)-like complex composed of at least the cullin RTT101, a linker protein MMS1, and the potential substrate receptor ESC2. Interacts with RTT101 and MMS1. Interacts with SIR2.

It localises to the cytoplasm. The protein localises to the nucleus. May be a substrate targeting component of a cullin-RING-based E3 ubiquitin-protein ligase complex RTT101(MMS1-ESC2). Involved in HMR and telomere silencing via the recruitment or stabilizing of the SIR (silent information regulators) complex. The polypeptide is Protein ESC2 (ESC2) (Saccharomyces cerevisiae (strain ATCC 204508 / S288c) (Baker's yeast)).